The following is a 246-amino-acid chain: Flagellar brake protein YcgR (246 aa).

The region spanning 122 to 234 is the PilZ domain; that stretch reads QRREFFRIQT…PMETIIQRYV (113 aa).

It belongs to the YcgR family. Monomer. Interacts with the flagellar basal bodies.

It localises to the bacterial flagellum basal body. Acts as a flagellar brake, regulating swimming and swarming in a bis-(3'-5') cyclic diguanylic acid (c-di-GMP)-dependent manner. Binds 1 c-di-GMP dimer per subunit. Increasing levels of c-di-GMP lead to decreased motility. In Chromobacterium violaceum (strain ATCC 12472 / DSM 30191 / JCM 1249 / CCUG 213 / NBRC 12614 / NCIMB 9131 / NCTC 9757 / MK), this protein is Flagellar brake protein YcgR.